Here is a 598-residue protein sequence, read N- to C-terminus: DNA (cytosine-5)-methyltransferase DRM2 (598 aa).

Disordered regions lie at residues 1 to 49 and 114 to 146; these read MVDW…NGKA and EVDEEEDDTNWDEYDTAGNCDRTPHSDGSGDED. In terms of domain architecture, UBA 1 spans 42-91; that stretch reads PQDANGKANGSGALVAEFMGMGFPKEMILKAIKEIGDTDTEQLLELLLTY. Residues 114–128 are compositionally biased toward acidic residues; it reads EVDEEEDDTNWDEYD. A UBA 2 domain is found at 150 to 194; it reads EMSEKDEKMKSLVNMGFPEDEAKMAIDRCGLDAPVAVLVDSIYAS. The disordered stretch occupies residues 227 to 252; it reads GSKKRKRYGSGPSGNQVPFDGSHEEP. The SAM-dependent MTase DRM-type domain occupies 272–598; sequence VHRNLPDQAL…EHVKATMSAV (327 aa).

Belongs to the class I-like SAM-binding methyltransferase superfamily. DRM-methyltransferase family. As to quaternary structure, interacts (via UBA domains) with EIF4A.

The protein resides in the nucleus. It catalyses the reaction a 2'-deoxycytidine in DNA + S-adenosyl-L-methionine = a 5-methyl-2'-deoxycytidine in DNA + S-adenosyl-L-homocysteine + H(+). Involved in de novo DNA methylation. Required for CpG and non-CpG methylation. Required for normal establishment and maintenance of RNA-directed DNA methylation (RdDM) mediated by small interfering RNAs (siRNAs). Regulates proper plant development in both vegetative and reproductive stages through DNA methylation. The sequence is that of DNA (cytosine-5)-methyltransferase DRM2 from Oryza sativa subsp. japonica (Rice).